Consider the following 338-residue polypeptide: 1-aminocyclopropane-1-carboxylate deaminase (338 aa).

K51 carries the N6-(pyridoxal phosphate)lysine modification. S78 (nucleophile) is an active-site residue.

This sequence belongs to the ACC deaminase/D-cysteine desulfhydrase family. Homotrimer. The cofactor is pyridoxal 5'-phosphate.

It catalyses the reaction 1-aminocyclopropane-1-carboxylate + H2O = 2-oxobutanoate + NH4(+). Catalyzes a cyclopropane ring-opening reaction, the irreversible conversion of 1-aminocyclopropane-1-carboxylate (ACC) to ammonia and alpha-ketobutyrate. Allows growth on ACC as a nitrogen source. This Burkholderia ambifaria (strain ATCC BAA-244 / DSM 16087 / CCUG 44356 / LMG 19182 / AMMD) (Burkholderia cepacia (strain AMMD)) protein is 1-aminocyclopropane-1-carboxylate deaminase.